A 246-amino-acid chain; its full sequence is UPF0736 protein GWCH70_0753 (246 aa).

Belongs to the UPF0736 family.

This chain is UPF0736 protein GWCH70_0753, found in Geobacillus sp. (strain WCH70).